Consider the following 455-residue polypeptide: GTPase Der (455 aa).

EngA-type G domains lie at Pro4–Asp169 and Ile178–Arg353. GTP is bound by residues Gly10–Ser17, Asp57–Leu61, Asn120–Glu123, Gly184–Ser191, Asp231–Ile235, and Asn296–Asp299. The 86-residue stretch at Arg354–Gln439 folds into the KH-like domain.

This sequence belongs to the TRAFAC class TrmE-Era-EngA-EngB-Septin-like GTPase superfamily. EngA (Der) GTPase family. As to quaternary structure, associates with the 50S ribosomal subunit.

Its function is as follows. GTPase that plays an essential role in the late steps of ribosome biogenesis. This is GTPase Der from Synechococcus sp. (strain CC9605).